A 691-amino-acid polypeptide reads, in one-letter code: Elongation factor G (691 aa).

One can recognise a tr-type G domain in the interval 8–283 (EDYRNFGIMA…AVVDYLPTPI (276 aa)). GTP is bound by residues 17–24 (AHIDAGKT), 81–85 (DTPGH), and 135–138 (NKMD).

It belongs to the TRAFAC class translation factor GTPase superfamily. Classic translation factor GTPase family. EF-G/EF-2 subfamily.

The protein localises to the cytoplasm. In terms of biological role, catalyzes the GTP-dependent ribosomal translocation step during translation elongation. During this step, the ribosome changes from the pre-translocational (PRE) to the post-translocational (POST) state as the newly formed A-site-bound peptidyl-tRNA and P-site-bound deacylated tRNA move to the P and E sites, respectively. Catalyzes the coordinated movement of the two tRNA molecules, the mRNA and conformational changes in the ribosome. The sequence is that of Elongation factor G from Beijerinckia indica subsp. indica (strain ATCC 9039 / DSM 1715 / NCIMB 8712).